Reading from the N-terminus, the 450-residue chain is UDP-N-acetylmuramoylalanine--D-glutamate ligase (450 aa).

Residue 118 to 124 participates in ATP binding; the sequence is GSNAKST.

This sequence belongs to the MurCDEF family.

The protein localises to the cytoplasm. The catalysed reaction is UDP-N-acetyl-alpha-D-muramoyl-L-alanine + D-glutamate + ATP = UDP-N-acetyl-alpha-D-muramoyl-L-alanyl-D-glutamate + ADP + phosphate + H(+). It participates in cell wall biogenesis; peptidoglycan biosynthesis. In terms of biological role, cell wall formation. Catalyzes the addition of glutamate to the nucleotide precursor UDP-N-acetylmuramoyl-L-alanine (UMA). In Pseudomonas putida (strain ATCC 47054 / DSM 6125 / CFBP 8728 / NCIMB 11950 / KT2440), this protein is UDP-N-acetylmuramoylalanine--D-glutamate ligase.